Here is a 496-residue protein sequence, read N- to C-terminus: Costunolide synthase (496 aa).

Residues 4–24 (FTIFSLVVASLVFFACWALVA) form a helical; Signal-anchor for type II membrane protein membrane-spanning segment. N-linked (GlcNAc...) asparagine glycosylation is found at Asn26, Asn168, Asn280, and Asn412. Cys434 lines the heme pocket.

It belongs to the cytochrome P450 family. It depends on heme as a cofactor. Expressed in floral glandular trichomes.

It is found in the membrane. The catalysed reaction is germacra-1(10),4,11(13)-trien-12-oate + reduced [NADPH--hemoprotein reductase] + O2 = (+)-costunolide + oxidized [NADPH--hemoprotein reductase] + 2 H2O. It functions in the pathway secondary metabolite biosynthesis; terpenoid biosynthesis. Its function is as follows. Involved in the biosynthesis of germacrene-derived sesquiterpene lactones. Component of the parthenolide biosynthetic pathway; parthenolide and conjugates are promising anti-cancer drugs highly active against colon cancer cells. Hydroxylates germacrene A acid to 6-alpha-hydroxy-germacrene A acid, a precursor of sesquiterpene lactones that spontaneously undergoes a lactonization which yields costunolide. In Tanacetum parthenium (Feverfew), this protein is Costunolide synthase.